A 204-amino-acid polypeptide reads, in one-letter code: Holliday junction branch migration complex subunit RuvA (204 aa).

A domain I region spans residues 1–64 (MIGRLQGILL…EDAHLLFGFA (64 aa)). Positions 65–143 (QKTDRTLFRE…GVKQSDFFVE (79 aa)) are domain II. Residues 144-155 (STHIPLSPSIES) form a flexible linker region. Residues 156-204 (HSESSSDEAISALIALGYKPAEAEKMVKRVAKPELTSEQVIREALKAAL) are domain III.

Belongs to the RuvA family. As to quaternary structure, homotetramer. Forms an RuvA(8)-RuvB(12)-Holliday junction (HJ) complex. HJ DNA is sandwiched between 2 RuvA tetramers; dsDNA enters through RuvA and exits via RuvB. An RuvB hexamer assembles on each DNA strand where it exits the tetramer. Each RuvB hexamer is contacted by two RuvA subunits (via domain III) on 2 adjacent RuvB subunits; this complex drives branch migration. In the full resolvosome a probable DNA-RuvA(4)-RuvB(12)-RuvC(2) complex forms which resolves the HJ.

The protein resides in the cytoplasm. In terms of biological role, the RuvA-RuvB-RuvC complex processes Holliday junction (HJ) DNA during genetic recombination and DNA repair, while the RuvA-RuvB complex plays an important role in the rescue of blocked DNA replication forks via replication fork reversal (RFR). RuvA specifically binds to HJ cruciform DNA, conferring on it an open structure. The RuvB hexamer acts as an ATP-dependent pump, pulling dsDNA into and through the RuvAB complex. HJ branch migration allows RuvC to scan DNA until it finds its consensus sequence, where it cleaves and resolves the cruciform DNA. The sequence is that of Holliday junction branch migration complex subunit RuvA from Haemophilus influenzae (strain PittGG).